Consider the following 255-residue polypeptide: Keratin-associated protein 10-2 (255 aa).

22 tandem repeats follow at residues 26 to 30, 36 to 40, 57 to 61, 79 to 83, 89 to 93, 99 to 103, 104 to 108, 109 to 113, 114 to 118, 120 to 124, 130 to 134, 145 to 149, 150 to 154, 162 to 166, 172 to 176, 182 to 186, 187 to 191, 192 to 196, 197 to 201, 209 to 213, 219 to 223, and 224 to 228. The tract at residues 26 to 228 is 22 X 5 AA repeats of C-C-X(3); that stretch reads CCELPCGTPS…CCTSSCCRPS (203 aa).

It belongs to the KRTAP type 10 family. As to quaternary structure, interacts with hair keratins. Restricted to a narrow region of the hair fiber cuticle, lying approximately 20 cell layers above the apex of the dermal papilla of the hair root; not detected in any other tissues.

In terms of biological role, in the hair cortex, hair keratin intermediate filaments are embedded in an interfilamentous matrix, consisting of hair keratin-associated proteins (KRTAP), which are essential for the formation of a rigid and resistant hair shaft through their extensive disulfide bond cross-linking with abundant cysteine residues of hair keratins. The matrix proteins include the high-sulfur and high-glycine-tyrosine keratins. This is Keratin-associated protein 10-2 (KRTAP10-2) from Homo sapiens (Human).